The sequence spans 260 residues: MKILISNDDGYQAPGIVALHDALKTIADVEVVAPEHNNSAKSNALTLHSPLYVQTAHNGFRYVNGTPADCVHIALTGLLGYRPDLVVSGINNGANMGDDTIYSGTVGAAMEGYLFGIPSIAFSQVDKGWGEIESAARKAREIVQQMDRQNLVGEAPWLLNVNIPNMPYDALRPLRMCRLGRRHAAERVIEQQSPRGELMYWIGGAGAAKDAAEGTDFHATAHGHVSVTPLKVDLTDYDGLGYWAQTVARLVPAQASGEVA.

4 residues coordinate a divalent metal cation: aspartate 8, aspartate 9, serine 39, and asparagine 91.

This sequence belongs to the SurE nucleotidase family. A divalent metal cation is required as a cofactor.

It is found in the cytoplasm. It catalyses the reaction a ribonucleoside 5'-phosphate + H2O = a ribonucleoside + phosphate. In terms of biological role, nucleotidase that shows phosphatase activity on nucleoside 5'-monophosphates. This chain is 5'-nucleotidase SurE, found in Acidovorax ebreus (strain TPSY) (Diaphorobacter sp. (strain TPSY)).